We begin with the raw amino-acid sequence, 97 residues long: Vitelline membrane protein 15a-2 (97 aa).

A signal peptide spans 1-19 (MNKIIAALVLFTAVIGALA). Positions 20-23 (DYPA) are required for binding to the gut receptor. A disordered region spans residues 26 to 46 (PPPPKPYHAPPPPPYHAPPHH). A VM domain is found at 61-97 (KAPAAKCGANLLVGCAPSVAHVPCVPVHPHPPPPAHY).

Belongs to the vitelline membrane protein family. In terms of tissue distribution, expressed in the anterior region of the follicle cells.

Its subcellular location is the secreted. In terms of biological role, has an oostatic activity. Inhibits trypsin biosynthesis in the midgut epithelial cells which indirectly reduces the vitellogenin concentration in the hemolymph resulting in inhibition of oocyte development. This is Vitelline membrane protein 15a-2 (15a-2) from Aedes aegypti (Yellowfever mosquito).